We begin with the raw amino-acid sequence, 563 residues long: Arginine--tRNA ligase (563 aa).

The 'HIGH' region signature appears at 120 to 130; the sequence is PNIAKPFHVGH.

This sequence belongs to the class-I aminoacyl-tRNA synthetase family. As to quaternary structure, monomer.

The protein resides in the cytoplasm. The enzyme catalyses tRNA(Arg) + L-arginine + ATP = L-arginyl-tRNA(Arg) + AMP + diphosphate. This chain is Arginine--tRNA ligase, found in Clostridium botulinum (strain Alaska E43 / Type E3).